The chain runs to 142 residues: MDLYELLEPTLAGLGYELVDLERSPGGKLLRIFIDKPGGVNVDDCVTVSNHLSRFLAVENVDYDRLEVSSPGLDRPLKKTADFIRFAGESVKLRLRVALQGQRNFVGILREVKDGILKLEVDGKMLDLELTNLEKVRLVPKL.

This sequence belongs to the RimP family.

Its subcellular location is the cytoplasm. Required for maturation of 30S ribosomal subunits. The chain is Ribosome maturation factor RimP from Nitrosospira multiformis (strain ATCC 25196 / NCIMB 11849 / C 71).